We begin with the raw amino-acid sequence, 468 residues long: Argininosuccinate synthase (468 aa).

Residues 10-18 (AYSGGLDTS) and Ala37 each bind ATP. L-citrulline contacts are provided by Tyr90 and Ser95. Gly120 lines the ATP pocket. L-aspartate contacts are provided by Thr122, Asn126, and Asp127. Asn126 is a binding site for L-citrulline. Positions 130, 182, 191, 267, and 279 each coordinate L-citrulline. The span at 445-457 (PVAAKATAKPVKA) shows a compositional bias: low complexity. The segment at 445 to 468 (PVAAKATAKPVKAPVKKPIAKKKG) is disordered. The span at 458 to 468 (PVKKPIAKKKG) shows a compositional bias: basic residues.

This sequence belongs to the argininosuccinate synthase family. Type 1 subfamily. Homotetramer.

It localises to the cytoplasm. It carries out the reaction L-citrulline + L-aspartate + ATP = 2-(N(omega)-L-arginino)succinate + AMP + diphosphate + H(+). The protein operates within amino-acid biosynthesis; L-arginine biosynthesis; L-arginine from L-ornithine and carbamoyl phosphate: step 2/3. The polypeptide is Argininosuccinate synthase (Dechloromonas aromatica (strain RCB)).